The primary structure comprises 405 residues: Calsequestrin-1 (405 aa).

The first 34 residues, 1–34, serve as a signal peptide directing secretion; sequence MRATDRMGARAVSELRLALLFVLVLGTPRLGVQG. Tyr-43 carries the post-translational modification Phosphotyrosine. A Phosphoserine modification is found at Ser-81. Residue Thr-124 is modified to Phosphothreonine. Residue Ser-216 is modified to Phosphoserine. The N-linked (GlcNAc...) asparagine glycan is linked to Asn-350. The tract at residues 382–405 is disordered; sequence EGEINTEDDDDDDDDDDDDDDDDD.

Belongs to the calsequestrin family. In terms of assembly, monomer; increases in response to a depletion of intracellular calcium. Homodimer. Homotetramer and homopolymer. Can form linear homooligomers. Ca(2+) ions promote oligomerization. Interacts (via C-terminal end and preferentially with the monomeric form) with STIM1; this interaction increases in response to a depletion of intracellular calcium, decreases both STIM1 aggregation and clustering, interaction of STIM1 with ORAI1 and store-operated Ca(2+) entry (SOCE) activity. Interacts with ASPH and TRDN. Post-translationally, N-glycosylated. Detected in skeletal muscle (at protein level). Detected in skeletal muscle.

Its subcellular location is the endoplasmic reticulum. The protein resides in the sarcoplasmic reticulum. It localises to the sarcoplasmic reticulum lumen. It is found in the sarcoplasmic reticulum membrane. The protein localises to the mitochondrion matrix. Functionally, calsequestrin is a high-capacity, moderate affinity, calcium-binding protein and thus acts as an internal calcium store in muscle. Calcium ions are bound by clusters of acidic residues at the protein surface, often at the interface between subunits. Can bind around 80 Ca(2+) ions. Regulates the release of lumenal Ca(2+) via the calcium release channel RYR1; this plays an important role in triggering muscle contraction. Negatively regulates store-operated Ca(2+) entry (SOCE) activity. This chain is Calsequestrin-1 (Casq1), found in Mus musculus (Mouse).